Reading from the N-terminus, the 350-residue chain is Atypical chemokine receptor 4 (350 aa).

At 1-41 the chain is on the extracellular side; sequence MAVEYNQSTDYYYEENEMNDTHDYSQYEVICIKEEVRKFAK. 2 N-linked (GlcNAc...) asparagine glycosylation sites follow: N6 and N19. A helical transmembrane segment spans residues 42 to 66; that stretch reads VFLPAFFTIAFIIGLAGNSTVVAIY. The Cytoplasmic portion of the chain corresponds to 67 to 79; it reads AYYKKRRTKTDVY. The chain crosses the membrane as a helical span at residues 80–99; that stretch reads ILNLAVADLFLLFTLPFWAV. Residues 100–113 lie on the Extracellular side of the membrane; the sequence is NAVHGWVLGKIMCK. A disulfide bond links C112 and C184. Residues 114–135 form a helical membrane-spanning segment; the sequence is VTSALYTVNFVSGMQFLACIST. The Cytoplasmic segment spans residues 136–153; sequence DRYWAVTKAPSQSGVGKP. Residues 154–175 form a helical membrane-spanning segment; the sequence is CWVICFCVWVAAILLSIPQLVF. Residues 176–199 lie on the Extracellular side of the membrane; it reads YTVNHKARCVPIFPYHLGTSMKAS. The helical transmembrane segment at 200–222 threads the bilayer; that stretch reads IQILEICIGFIIPFLIMAVCYFI. Residues 223–241 are Cytoplasmic-facing; the sequence is TAKTLIKMPNIKKSQPLKV. A helical transmembrane segment spans residues 242-265; sequence LFTVVIVFIVTQLPYNIVKFCQAI. The Extracellular portion of the chain corresponds to 266–283; sequence DIIYSLITDCDMSKRMDV. A helical transmembrane segment spans residues 284 to 306; the sequence is AIQITESIALFHSCLNPVLYVFM. Residues 307–350 lie on the Cytoplasmic side of the membrane; sequence GTSFKNYIMKVAKKYGSWRRQRQNVEEIPFESEDATEPTSTFSI.

This sequence belongs to the G-protein coupled receptor 1 family. Atypical chemokine receptor subfamily. As to quaternary structure, forms heteromers with CXCR3. Interacts with ARRB1 and ARRB2. The Ser/Thr residues in the C-terminal cytoplasmic tail may be phosphorylated. Expressed in circumvallate and fungiform papillae, olfactory epithelium and lung. Lower expression in liver, kidney and tongue epithelium bearing no taste papillae. Very low expression in the cerebral cortex of the brain.

It localises to the early endosome. The protein resides in the recycling endosome. It is found in the cell membrane. In terms of biological role, atypical chemokine receptor that controls chemokine levels and localization via high-affinity chemokine binding that is uncoupled from classic ligand-driven signal transduction cascades, resulting instead in chemokine sequestration, degradation, or transcytosis. Also known as interceptor (internalizing receptor) or chemokine-scavenging receptor or chemokine decoy receptor. Acts as a receptor for chemokines CCL2, CCL8, CCL13, CCL19, CCL21 and CCL25. Chemokine-binding does not activate G-protein-mediated signal transduction but instead induces beta-arrestin recruitment, leading to ligand internalization. Plays an important role in controlling the migration of immune and cancer cells that express chemokine receptors CCR7 and CCR9, by reducing the availability of CCL19, CCL21, and CCL25 through internalization. Negatively regulates CXCR3-induced chemotaxis. Regulates T-cell development in the thymus. The protein is Atypical chemokine receptor 4 (ACKR4) of Bos taurus (Bovine).